A 252-amino-acid chain; its full sequence is Curing of [URE3] protein 1 (252 aa).

It localises to the nucleus. Involved in the curing of prion [URE3]. Nuclear localization of this protein may suggest a role in transcription regulation, so it might exert an effect on [URE3] through known prion-curing chaperones or BTN2. This Saccharomyces cerevisiae (strain ATCC 204508 / S288c) (Baker's yeast) protein is Curing of [URE3] protein 1 (CUR1).